A 206-amino-acid polypeptide reads, in one-letter code: Large ribosomal subunit protein uL4 (206 aa).

A compositionally biased stretch (basic residues) spans 66 to 77 (QKGTGRARHHSA). The segment at 66 to 96 (QKGTGRARHHSARAPQFRGGGQAHGPVVRSH) is disordered.

It belongs to the universal ribosomal protein uL4 family. Part of the 50S ribosomal subunit.

One of the primary rRNA binding proteins, this protein initially binds near the 5'-end of the 23S rRNA. It is important during the early stages of 50S assembly. It makes multiple contacts with different domains of the 23S rRNA in the assembled 50S subunit and ribosome. Functionally, forms part of the polypeptide exit tunnel. This Brucella anthropi (strain ATCC 49188 / DSM 6882 / CCUG 24695 / JCM 21032 / LMG 3331 / NBRC 15819 / NCTC 12168 / Alc 37) (Ochrobactrum anthropi) protein is Large ribosomal subunit protein uL4.